We begin with the raw amino-acid sequence, 440 residues long: Probable carboxypeptidase AFUB_072730 (440 aa).

An N-terminal signal peptide occupies residues 1 to 16 (MKPLTSLLLSAALSAA). 2 N-linked (GlcNAc...) asparagine glycosylation sites follow: Asn-87 and Asn-149. Residue Asp-165 participates in Zn(2+) binding. Glu-197 functions as the Proton acceptor in the catalytic mechanism. Position 198 (Glu-198) interacts with Zn(2+). N-linked (GlcNAc...) asparagine glycans are attached at residues Asn-353 and Asn-372.

Belongs to the peptidase M20A family. Requires Zn(2+) as cofactor.

It is found in the secreted. The polypeptide is Probable carboxypeptidase AFUB_072730 (Aspergillus fumigatus (strain CBS 144.89 / FGSC A1163 / CEA10) (Neosartorya fumigata)).